We begin with the raw amino-acid sequence, 229 residues long: Protein FAM3C (229 aa).

The first 24 residues, 1 to 24, serve as a signal peptide directing secretion; sequence MRIAGAIKFVIAVALFLLTFYVIS. 2 disulfide bridges follow: cysteine 59/cysteine 87 and cysteine 65/cysteine 222. A GG-type lectin domain is found at 68–226; sequence KHFAFKIASG…VEMEGCIPQK (159 aa).

This sequence belongs to the FAM3 family.

It localises to the secreted. In terms of biological role, involved in retinal laminar formation. This chain is Protein FAM3C (fam3c), found in Xenopus tropicalis (Western clawed frog).